A 482-amino-acid polypeptide reads, in one-letter code: uncharacterized protein (482 aa).

2 stretches are compositionally biased toward low complexity: residues 24–86 and 312–339; these read SPNS…AQQQ and TDSL…SQSI. Disordered regions lie at residues 24-88 and 307-376; these read SPNS…QQHY and LHSQ…LIGK. A compositionally biased stretch (acidic residues) spans 342-363; it reads EEEEDGGEDEEEEGGEDNDNES.

This is an uncharacterized protein from Dictyostelium discoideum (Social amoeba).